The primary structure comprises 593 residues: Thiol:disulfide interchange protein DsbD (593 aa).

The N-terminal stretch at 1–21 (MRALLTFFVAGLLVLSSPAMA) is a signal peptide. 2 cysteine pairs are disulfide-bonded: Cys-130/Cys-136 and Cys-207/Cys-328. 8 consecutive transmembrane segments (helical) span residues 193–215 (LLFLALGVGLAFTPCVLPMYPIL), 235–257 (LVYVQGMALTYTLLGLVVASAGL), 269–291 (LIGLSILFVTLALSMFGVYTLQL), 318–340 (GAISGLVCSPCTTAPLSGALLYV), 347–369 (LTGGVALYALAMGMGIPLILVAV), 384–401 (RVKTLFGFVLLAAPIFLL), 408–425 (MWSTALWSALGIAAFGWL), and 440–462 (SAVGIIAVLGLFASAQPALNYWF). The Thioredoxin domain occupies 451 to 593 (FASAQPALNY…FLEHIQRISN (143 aa)). Residues Cys-508 and Cys-511 are joined by a disulfide bond.

It belongs to the thioredoxin family. DsbD subfamily.

The protein localises to the cell inner membrane. The enzyme catalyses [protein]-dithiol + NAD(+) = [protein]-disulfide + NADH + H(+). It catalyses the reaction [protein]-dithiol + NADP(+) = [protein]-disulfide + NADPH + H(+). Functionally, required to facilitate the formation of correct disulfide bonds in some periplasmic proteins and for the assembly of the periplasmic c-type cytochromes. Acts by transferring electrons from cytoplasmic thioredoxin to the periplasm. This transfer involves a cascade of disulfide bond formation and reduction steps. This chain is Thiol:disulfide interchange protein DsbD, found in Vibrio vulnificus (strain CMCP6).